We begin with the raw amino-acid sequence, 426 residues long: Adenylosuccinate synthetase (426 aa).

Residues Gly-12–Lys-18 and Gly-40–Thr-42 each bind GTP. Asp-13 (proton acceptor) is an active-site residue. Mg(2+) contacts are provided by Asp-13 and Gly-40. IMP-binding positions include Asp-13 to Lys-16, Asn-38 to His-41, Thr-128, Arg-142, Gln-223, Thr-238, and Arg-302. Residue His-41 is the Proton donor of the active site. Thr-298–Arg-304 is a substrate binding site. GTP contacts are provided by residues Arg-304, Lys-330 to Asp-332, and Ser-412 to Gly-414.

This sequence belongs to the adenylosuccinate synthetase family. As to quaternary structure, homodimer. Mg(2+) serves as cofactor.

Its subcellular location is the cytoplasm. The catalysed reaction is IMP + L-aspartate + GTP = N(6)-(1,2-dicarboxyethyl)-AMP + GDP + phosphate + 2 H(+). It functions in the pathway purine metabolism; AMP biosynthesis via de novo pathway; AMP from IMP: step 1/2. Functionally, plays an important role in the de novo pathway of purine nucleotide biosynthesis. Catalyzes the first committed step in the biosynthesis of AMP from IMP. The protein is Adenylosuccinate synthetase of Thermoanaerobacter pseudethanolicus (strain ATCC 33223 / 39E) (Clostridium thermohydrosulfuricum).